The sequence spans 466 residues: Methylenomycin A resistance protein (466 aa).

14 helical membrane passes run 16-36 (ISVL…VTVV), 56-76 (WVVD…GALA), 83-103 (TIYI…AASI), 113-133 (LIQG…LAAS), 146-166 (LWAA…GVLV), 168-188 (LAGW…ALIS), 203-223 (VNII…YALI), 234-254 (VILV…LREI), 276-296 (FIGF…SLFL), 305-325 (FMAG…NLLF), 337-357 (LMFV…VLIS), 367-387 (VLMS…TTVI), 409-429 (IGAL…ATWY), and 434-454 (FAFL…WLFL).

Belongs to the major facilitator superfamily. EmrB family.

It localises to the cell membrane. In terms of biological role, resistance to the epoxide antibiotic methylenomycin. The polypeptide is Methylenomycin A resistance protein (mmr) (Bacillus subtilis (strain 168)).